The chain runs to 214 residues: Mexicain (214 aa).

Disulfide bonds link cysteine 22/cysteine 63, cysteine 56/cysteine 95, and cysteine 153/cysteine 200. Residue cysteine 25 is part of the active site. Cysteine 25 contributes to the E64 binding site. Catalysis depends on residues histidine 159 and asparagine 175.

The protein belongs to the peptidase C1 family. As to expression, expressed in latex.

Its subcellular location is the secreted. Functionally, cysteine protease. This chain is Mexicain, found in Jacaratia mexicana (Wild papaya).